We begin with the raw amino-acid sequence, 308 residues long: Cobalamin biosynthesis protein CobD (308 aa).

6 helical membrane-spanning segments follow: residues 1-21, 50-70, 71-91, 151-171, 202-222, and 284-304; these read MEILLIFLLALVIDMVFGDPP, FVYGIVMVIFTMALFFVPVYF, LLDWLQGINSIVYIIVSAILF, IGDGFVAPLFFFLIFGVPGVM, VLNFIPARLSALCILVASFFG, and LVLINNAGCIWVLISVGVIYF.

This sequence belongs to the CobD/CbiB family.

Its subcellular location is the cell membrane. It participates in cofactor biosynthesis; adenosylcobalamin biosynthesis. Its function is as follows. Converts cobyric acid to cobinamide by the addition of aminopropanol on the F carboxylic group. The sequence is that of Cobalamin biosynthesis protein CobD from Dehalococcoides mccartyi (strain CBDB1).